We begin with the raw amino-acid sequence, 225 residues long: Ribonuclease HII (225 aa).

The RNase H type-2 domain occupies 35–225 (GLVAGVDEVG…SFRPCQISPD (191 aa)). A divalent metal cation is bound by residues aspartate 41, glutamate 42, and aspartate 137.

It belongs to the RNase HII family. Mn(2+) is required as a cofactor. Requires Mg(2+) as cofactor.

It localises to the cytoplasm. The catalysed reaction is Endonucleolytic cleavage to 5'-phosphomonoester.. Endonuclease that specifically degrades the RNA of RNA-DNA hybrids. The protein is Ribonuclease HII of Nostoc sp. (strain PCC 7120 / SAG 25.82 / UTEX 2576).